Reading from the N-terminus, the 113-residue chain is Dolichyl-diphosphooligosaccharide--protein glycosyltransferase subunit DAD1 (113 aa).

The Cytoplasmic segment spans residues 1-30 (MGSSAFEVLTFFLKDYKANTPQKLKIIDAY). The helical transmembrane segment at 31–51 (LLYILLTGINQFLYCCLVGTF) threads the bilayer. Pro-52 is a topological domain (lumenal). The helical transmembrane segment at 53–73 (FNSFLSGFISCVASFVLGVCL) threads the bilayer. The Cytoplasmic segment spans residues 74–92 (RLQVNPQNSSNFCGIPPER). A helical transmembrane segment spans residues 93–113 (AFADFIFAHVVLHLVVMNFIG).

It belongs to the DAD/OST2 family. In terms of assembly, component of the oligosaccharyltransferase (OST) complex. As to expression, widely expressed. Greatest expression seen in the epidermis, intermediate expression in the fat body and midgut and mild expression observed in the silk gland.

The protein resides in the endoplasmic reticulum membrane. It functions in the pathway protein modification; protein glycosylation. Its function is as follows. Subunit of the oligosaccharyl transferase (OST) complex that catalyzes the initial transfer of a defined glycan (Glc(3)Man(9)GlcNAc(2) in eukaryotes) from the lipid carrier dolichol-pyrophosphate to an asparagine residue within an Asn-X-Ser/Thr consensus motif in nascent polypeptide chains, the first step in protein N-glycosylation. N-glycosylation occurs cotranslationally and the complex associates with the Sec61 complex at the channel-forming translocon complex that mediates protein translocation across the endoplasmic reticulum (ER). All subunits are required for a maximal enzyme activity. This chain is Dolichyl-diphosphooligosaccharide--protein glycosyltransferase subunit DAD1, found in Araneus ventricosus (Orbweaver spider).